A 339-amino-acid polypeptide reads, in one-letter code: Small ribosomal subunit biogenesis GTPase RsgA (339 aa).

One can recognise a CP-type G domain in the interval 111–271 (MRGLLKPVAA…LIDSPGIREF (161 aa)). GTP is bound by residues 159–162 (NKAD) and 213–221 (GQSGVGKSS). Residues Cys295, Cys300, His302, and Cys308 each coordinate Zn(2+).

It belongs to the TRAFAC class YlqF/YawG GTPase family. RsgA subfamily. In terms of assembly, monomer. Associates with 30S ribosomal subunit, binds 16S rRNA. It depends on Zn(2+) as a cofactor.

It is found in the cytoplasm. One of several proteins that assist in the late maturation steps of the functional core of the 30S ribosomal subunit. Helps release RbfA from mature subunits. May play a role in the assembly of ribosomal proteins into the subunit. Circularly permuted GTPase that catalyzes slow GTP hydrolysis, GTPase activity is stimulated by the 30S ribosomal subunit. This Pseudomonas aeruginosa (strain LESB58) protein is Small ribosomal subunit biogenesis GTPase RsgA.